An 88-amino-acid chain; its full sequence is Molybdopterin synthase sulfur carrier subunit (88 aa).

Position 88 is a 1-thioglycine; alternate (glycine 88). The residue at position 88 (glycine 88) is a Glycyl adenylate; alternate.

The protein belongs to the MoaD family. MOCS2A subfamily. In terms of assembly, heterotetramer; composed of 2 small (MOCS2A) and 2 large (MOCS2B) subunits. In terms of processing, C-terminal thiocarboxylation occurs in 2 steps, it is first acyl-adenylated (-COAMP) via the hesA/moeB/thiF part of MOCS3, then thiocarboxylated (-COSH) via the rhodanese domain of MOCS3. In terms of tissue distribution, widely expressed. Highest levels are found in heart and skeletal muscle. Lower levels are present in brain, kidney and pancreas. Very low levels are found in lung and peripheral blood leukocytes.

The protein localises to the cytoplasm. It localises to the cytosol. It functions in the pathway cofactor biosynthesis; molybdopterin biosynthesis. In terms of biological role, acts as a sulfur carrier required for molybdopterin biosynthesis. Component of the molybdopterin synthase complex that catalyzes the conversion of precursor Z into molybdopterin by mediating the incorporation of 2 sulfur atoms into precursor Z to generate a dithiolene group. In the complex, serves as sulfur donor by being thiocarboxylated (-COSH) at its C-terminus by MOCS3. After interaction with MOCS2B, the sulfur is then transferred to precursor Z to form molybdopterin. This Homo sapiens (Human) protein is Molybdopterin synthase sulfur carrier subunit.